We begin with the raw amino-acid sequence, 158 residues long: Mitotic-spindle organizing protein 2A (158 aa).

Ser-34 carries the post-translational modification Phosphoserine. Residues Arg-84–Thr-158 form a disordered region. Residues Ser-112–Ala-122 show a composition bias toward low complexity. Residues Glu-128–Ala-140 show a composition bias toward polar residues. A Phosphoserine modification is found at Ser-152.

This sequence belongs to the MOZART2 family. In terms of assembly, associates with the gamma-tubulin ring complex (gTuRC) consisting of TUBGCP2, TUBGCP3, TUBGCP4, TUBGCP5 and TUBGCP6 and gamma-tubulin TUBG1 or TUBG2; within the complex, interacts with TUBGCP2; the interaction plays a role in gTuRC activation.

Its subcellular location is the cytoplasm. It is found in the cytoskeleton. The protein resides in the microtubule organizing center. The protein localises to the centrosome. It localises to the spindle. Functionally, required for the recruitment and the assembly of the gamma-tubulin ring complex (gTuRC) at the centrosome. The gTuRC regulates the minus-end nucleation of alpha-beta tubulin heterodimers that grow into microtubule protafilaments, a critical step in centrosome duplication and spindle formation. The sequence is that of Mitotic-spindle organizing protein 2A (MZT2A) from Homo sapiens (Human).